Consider the following 428-residue polypeptide: GTPase Obg (428 aa).

The Obg domain maps to 1 to 158 (MFIDIAKVFI…LSIVLELKLL (158 aa)). The OBG-type G domain occupies 159-331 (ADVGLLGFPN…VIKEAARMLK (173 aa)). GTP contacts are provided by residues 165–172 (GFPNVGKS), 190–194 (FTTLK), 212–215 (DIPG), 282–285 (NKSD), and 312–314 (SAA). Positions 172 and 192 each coordinate Mg(2+). One can recognise an OCT domain in the interval 345–428 (MYIPEEKKFT…LNDFEFEYLL (84 aa)).

It belongs to the TRAFAC class OBG-HflX-like GTPase superfamily. OBG GTPase family. In terms of assembly, monomer. Mg(2+) is required as a cofactor.

The protein localises to the cytoplasm. An essential GTPase which binds GTP, GDP and possibly (p)ppGpp with moderate affinity, with high nucleotide exchange rates and a fairly low GTP hydrolysis rate. Plays a role in control of the cell cycle, stress response, ribosome biogenesis and in those bacteria that undergo differentiation, in morphogenesis control. In Clostridium botulinum (strain Alaska E43 / Type E3), this protein is GTPase Obg.